The sequence spans 441 residues: COP9 signalosome complex subunit 1 (441 aa).

Residues 1 to 28 (MERDEEASGPMMEMCTNGGEETSNRRPI) form a disordered region. In terms of domain architecture, PCI spans 230 to 400 (KYKLAARKFL…KILYARHADQ (171 aa)).

The protein belongs to the CSN1 family. Component of the CSN complex, probably composed of CSN1, CSN2, CSN3, CSN4, CSN5 (CSN5A or CSN5B), CSN6 (CSN6A or CSN6B), CSN7 and CSN8. Interacts with itself and (via PCI domain) with CSN7 (via PCI domain). In the CSN complex, it probably interacts directly with CSN2, CSN3, CSN4 and CSN5B. Interacts with the 26S proteasome subunit RPN6. Interacts (via N-terminal domain) with TSA1 (via C-terminal domain). Binds to the translation initiation factors TIF3C1, TIF3E1 and TIF3H1. In terms of tissue distribution, expressed in leaves, flowers, immature siliques, and light-grown roots.

The protein localises to the cytoplasm. The protein resides in the nucleus. In terms of biological role, component of the COP9 signalosome complex (CSN), a complex involved in various cellular and developmental processes such as photomorphogenesis and auxin and jasmonate responses. The CSN complex is an essential regulator of the ubiquitin (Ubl) conjugation pathway by mediating the deneddylation of the cullin subunits of SCF-type E3 ligase complexes, leading to decrease the Ubl ligase activity of SCF. It is involved in repression of photomorphogenesis in darkness by regulating the activity of COP1-containing Ubl ligase complexes. The complex is also required for degradation of IAA6 by regulating the activity of the Ubl ligase SCF-TIR complex. In the complex, it plays a central role in CSN assembly. The protein is COP9 signalosome complex subunit 1 (CSN1) of Arabidopsis thaliana (Mouse-ear cress).